Reading from the N-terminus, the 357-residue chain is N-methyltransferase dtpB (357 aa).

This sequence belongs to the methyltransferase superfamily.

Its pathway is alkaloid biosynthesis. N-methyltransferase; part of the gene cluster that mediates the biosynthesis of the dimeric diketopiperazine alkaloid ditryptophenaline. The nonribosomal peptide synthase dtpA accepts L-tryptophan and L-phenylalanine as its substrates and forms the phenylalanyl-tryptophanyl cyclic dipeptide product cyclophenylalanyltryptophenyl. The N-methyltransferase dtpB is responsible for the N-methylation of cyclophenylalanyltryptophenyl to yield cyclo-N-methylphenylalanyltryptophenyl. The cytochrome P450 monooxygenase is responsible not only for pyrroloindole ring formation but also for concurrent dimerization of N-methylphenylalanyltryptophanyl diketopiperazine monomers into a homodimeric product. In Aspergillus flavus (strain ATCC 200026 / FGSC A1120 / IAM 13836 / NRRL 3357 / JCM 12722 / SRRC 167), this protein is N-methyltransferase dtpB.